A 323-amino-acid polypeptide reads, in one-letter code: Porphobilinogen deaminase (323 aa).

Cys-240 bears the S-(dipyrrolylmethanemethyl)cysteine mark.

It belongs to the HMBS family. Monomer. It depends on dipyrromethane as a cofactor.

It carries out the reaction 4 porphobilinogen + H2O = hydroxymethylbilane + 4 NH4(+). The protein operates within porphyrin-containing compound metabolism; protoporphyrin-IX biosynthesis; coproporphyrinogen-III from 5-aminolevulinate: step 2/4. Functionally, tetrapolymerization of the monopyrrole PBG into the hydroxymethylbilane pre-uroporphyrinogen in several discrete steps. The sequence is that of Porphobilinogen deaminase from Sulfurovum sp. (strain NBC37-1).